Here is an 82-residue protein sequence, read N- to C-terminus: Large ribosomal subunit protein bL31B (82 aa).

This sequence belongs to the bacterial ribosomal protein bL31 family. Type B subfamily. Part of the 50S ribosomal subunit.

The polypeptide is Large ribosomal subunit protein bL31B (Proteus mirabilis (strain HI4320)).